The following is a 262-amino-acid chain: Type III pantothenate kinase (262 aa).

Asp9–Lys16 contacts ATP. Residues Tyr93 and Gly100–Arg103 each bind substrate. Asp102 acts as the Proton acceptor in catalysis. Asp122 lines the K(+) pocket. Thr125 contributes to the ATP binding site. Residue Thr175 coordinates substrate.

Belongs to the type III pantothenate kinase family. Homodimer. The cofactor is NH4(+). K(+) serves as cofactor.

The protein resides in the cytoplasm. It carries out the reaction (R)-pantothenate + ATP = (R)-4'-phosphopantothenate + ADP + H(+). It participates in cofactor biosynthesis; coenzyme A biosynthesis; CoA from (R)-pantothenate: step 1/5. In terms of biological role, catalyzes the phosphorylation of pantothenate (Pan), the first step in CoA biosynthesis. The sequence is that of Type III pantothenate kinase from Nitrosospira multiformis (strain ATCC 25196 / NCIMB 11849 / C 71).